The sequence spans 369 residues: MADHYEVLGVERNATPDEIKKAYRRLARELHPDVNPSTEAQERFKLVTHAYDVLSDPQQRQQYDRGGASGFGGGGGADFSGFGDIFETFFGGGGASRGPRSRRERGQDALLRVEVDLDEVVFGAHRDLEVDTAIVCETCDGSCCQPGTAPVPCDICHGTGSIQRSVRSLLGNVMTSSPCGSCRGYGTVIATPCVTCQGQGRVRARRTVPVDIPAGVDTGLRLQMPGSGEAGPAGGPNGDLYLEIKVKHHDVFSRDGDDLLCTLEVSMADAILGAAATIKALDGDIRLELKPGTQSADIVSVKDRGITHLRCSGRGDLRVGIQVVTPTKLDHREKELIKKFAESHKASEPSLARFQQGLFAKLRDRFLNV.

The 65-residue stretch at 3–67 folds into the J domain; that stretch reads DHYEVLGVER…QQRQQYDRGG (65 aa). The CR-type zinc-finger motif lies at 123 to 205; the sequence is GAHRDLEVDT…CQGQGRVRAR (83 aa). Zn(2+) contacts are provided by Cys-136, Cys-139, Cys-153, Cys-156, Cys-179, Cys-182, Cys-193, and Cys-196. 4 CXXCXGXG motif repeats span residues 136–143, 153–160, 179–186, and 193–200; these read CETCDGSC, CDICHGTG, CGSCRGYG, and CVTCQGQG.

It belongs to the DnaJ family. Homodimer. Zn(2+) is required as a cofactor.

The protein localises to the cytoplasm. Functionally, participates actively in the response to hyperosmotic and heat shock by preventing the aggregation of stress-denatured proteins and by disaggregating proteins, also in an autonomous, DnaK-independent fashion. Unfolded proteins bind initially to DnaJ; upon interaction with the DnaJ-bound protein, DnaK hydrolyzes its bound ATP, resulting in the formation of a stable complex. GrpE releases ADP from DnaK; ATP binding to DnaK triggers the release of the substrate protein, thus completing the reaction cycle. Several rounds of ATP-dependent interactions between DnaJ, DnaK and GrpE are required for fully efficient folding. Also involved, together with DnaK and GrpE, in the DNA replication of plasmids through activation of initiation proteins. The chain is Chaperone protein DnaJ from Leifsonia xyli subsp. xyli (strain CTCB07).